A 189-amino-acid polypeptide reads, in one-letter code: MKTFQLKGFRRDFLGKKAVKAYRKESLIPCVLYGGNENVIHFNVFRENLRKLVYTPDVFIVNLCIEEKLYLSILKEIQFHPVNDEILHVDFLRIFKNKPVIIEIPVVLEGLAEGIKAGGKLCSEMRKLKVKGFYKDFPERLVINVENLELGKTIQVGKLSFDNLELLNAKDNVVASVKLTRTARSTVSQ.

The protein belongs to the bacterial ribosomal protein bL25 family. CTC subfamily. In terms of assembly, part of the 50S ribosomal subunit; part of the 5S rRNA/L5/L18/L25 subcomplex. Contacts the 5S rRNA. Binds to the 5S rRNA independently of L5 and L18.

Its function is as follows. This is one of the proteins that binds to the 5S RNA in the ribosome where it forms part of the central protuberance. The polypeptide is Large ribosomal subunit protein bL25 (Azobacteroides pseudotrichonymphae genomovar. CFP2).